The following is a 420-amino-acid chain: Torsin-4A-A (420 aa).

A helical transmembrane segment spans residues Cys130–Asp150. Gly202 to Ser209 is a binding site for ATP.

It belongs to the ClpA/ClpB family. Torsin subfamily.

Its subcellular location is the membrane. This Xenopus laevis (African clawed frog) protein is Torsin-4A-A (tor4a-a).